Reading from the N-terminus, the 423-residue chain is Putative galacturan 1,4-alpha-galacturonidase C (423 aa).

An N-terminal signal peptide occupies residues 1–20 (MRFSIISLVSLPLFLGLTYA). Asparagine 100, asparagine 120, asparagine 150, asparagine 173, and asparagine 185 each carry an N-linked (GlcNAc...) asparagine glycan. Aspartate 229 serves as the catalytic Proton donor. A disulfide bridge connects residues cysteine 231 and cysteine 248. Residue asparagine 245 is glycosylated (N-linked (GlcNAc...) asparagine). Residue asparagine 252 is part of the active site. N-linked (GlcNAc...) asparagine glycans are attached at residues asparagine 344 and asparagine 362. An intrachain disulfide couples cysteine 379 to cysteine 385. N-linked (GlcNAc...) asparagine glycosylation occurs at asparagine 400. Cysteines 409 and 423 form a disulfide.

Belongs to the glycosyl hydrolase 28 family.

It localises to the secreted. The enzyme catalyses [(1-&gt;4)-alpha-D-galacturonosyl](n) + H2O = alpha-D-galacturonate + [(1-&gt;4)-alpha-D-galacturonosyl](n-1). Functionally, specific in hydrolyzing the terminal glycosidic bond of polygalacturonic acid and oligogalacturonates. This chain is Putative galacturan 1,4-alpha-galacturonidase C (rgxC), found in Neosartorya fischeri (strain ATCC 1020 / DSM 3700 / CBS 544.65 / FGSC A1164 / JCM 1740 / NRRL 181 / WB 181) (Aspergillus fischerianus).